Consider the following 197-residue polypeptide: uncharacterized protein (197 aa).

The first 23 residues, 1-23 (MSARAPKELRLALPPCLLNRTFA), serve as a signal peptide directing secretion. Asn-19 and Asn-26 each carry an N-linked (GlcNAc...) asparagine glycan. Topologically, residues 24 to 61 (SPNASGSGNTGARGPGAGGSGTCITQVGQQLFQSFSST) are extracellular. The chain crosses the membrane as a helical span at residues 62–82 (LVLIVLVTLIFCLIVLSLSTF). Residues 83–197 (HIHKRRMKKR…EGLLQTVVLS (115 aa)) lie on the Cytoplasmic side of the membrane. The segment at 94-180 (MQRAQEEYER…SSPQGAHAAS (87 aa)) is disordered. 2 stretches are compositionally biased toward basic and acidic residues: residues 96 to 107 (RAQEEYERDHCS) and 125 to 136 (HTKETRLERQPR). Low complexity predominate over residues 147-161 (SSSSSSSPGLLCQGP). The segment covering 162-171 (CAPPPPPPAS) has biased composition (pro residues).

It is found in the membrane. This is an uncharacterized protein from Macaca fascicularis (Crab-eating macaque).